Here is a 378-residue protein sequence, read N- to C-terminus: Response regulator aspartate phosphatase A (378 aa).

TPR repeat units follow at residues 101 to 137 (YYFNFFRGMYEFKQKMFVSAMMYYKRAEKNLALVSDD), 148 to 181 (AEIFYNLKQTYVSMSYAVQALETYQMYETYTVRR), 183 to 215 (QCEFVIAGNYDDMQYPERALPHLELALDLAKKE), 222 to 255 (SSALYNLGNCYEKMGELQKAAEYFGKSVSICKSE), 261 to 294 (PHSIYSLTQVLYKQKNDAEAQKKYREGLEIARQY), and 336 to 369 (EELAHDAAQFYIENGQPEKALSFYEKMVHAQKQI).

It belongs to the Rap family. In terms of assembly, homodimer. Interacts with its substrate, phosphorylated Spo0F, and its inhibitor, the PhrA pentapeptide. The RapA dimer forms a stable complex with two molecules of phosphorylated Spo0F. The complex is dissociated after dephosphorylation of Spo0F by RapA. Mn(2+) is required as a cofactor.

Its subcellular location is the cytoplasm. Its activity is regulated as follows. Phosphatase activity is inhibited by the phosphatase regulator PhrA. Interaction with PhrA dissociates the RapA-Spo0F complex. Activity is abolished in the presence of EDTA. Its function is as follows. Involved in the regulation of sporulation. Acts as a phosphatase that specifically dephosphorylates the sporulation initiation phosphotransferase Spo0F and inhibits its activity. In Bacillus subtilis (strain 168), this protein is Response regulator aspartate phosphatase A.